The chain runs to 829 residues: Periplasmic nitrate reductase (829 aa).

Residues 1 to 29 (MKMTRRAFVKANAAASAAAVAGVTLPASA) constitute a signal peptide (tat-type signal). Positions 41–97 (IKWDKAPCRFCGTGCSVLVGTQNGRVVATQGDPEAPVNKGLNCIKGYFLSKIMYGKD) constitute a 4Fe-4S Mo/W bis-MGD-type domain. The [4Fe-4S] cluster site is built by cysteine 48, cysteine 51, cysteine 55, and cysteine 83. Mo-bis(molybdopterin guanine dinucleotide) contacts are provided by residues lysine 85, glutamine 152, asparagine 177, cysteine 181, 214-221 (WGSNMAEM), 245-249 (STYYH), 264-266 (QSD), methionine 374, glutamine 378, asparagine 484, 510-511 (SD), lysine 533, aspartate 560, and 718-727 (TGRVLEHWHT). Phenylalanine 794 contributes to the substrate binding site. The Mo-bis(molybdopterin guanine dinucleotide) site is built by asparagine 802 and lysine 819.

This sequence belongs to the prokaryotic molybdopterin-containing oxidoreductase family. NasA/NapA/NarB subfamily. In terms of assembly, component of the periplasmic nitrate reductase NapAB complex composed of NapA and NapB. The cofactor is [4Fe-4S] cluster. It depends on Mo-bis(molybdopterin guanine dinucleotide) as a cofactor. Predicted to be exported by the Tat system. The position of the signal peptide cleavage has not been experimentally proven.

Its subcellular location is the periplasm. It catalyses the reaction 2 Fe(II)-[cytochrome] + nitrate + 2 H(+) = 2 Fe(III)-[cytochrome] + nitrite + H2O. Functionally, catalytic subunit of the periplasmic nitrate reductase complex NapAB. Receives electrons from NapB and catalyzes the reduction of nitrate to nitrite. In Aliivibrio fischeri (strain MJ11) (Vibrio fischeri), this protein is Periplasmic nitrate reductase.